The following is a 388-amino-acid chain: Chorismate synthase (388 aa).

Residues Arg-39 and Arg-45 each coordinate NADP(+). FMN is bound by residues 130-132 (RSS), 251-252 (NA), Ala-296, 311-315 (KPIPT), and Arg-337.

Belongs to the chorismate synthase family. As to quaternary structure, homotetramer. FMNH2 is required as a cofactor.

It carries out the reaction 5-O-(1-carboxyvinyl)-3-phosphoshikimate = chorismate + phosphate. The protein operates within metabolic intermediate biosynthesis; chorismate biosynthesis; chorismate from D-erythrose 4-phosphate and phosphoenolpyruvate: step 7/7. In terms of biological role, catalyzes the anti-1,4-elimination of the C-3 phosphate and the C-6 proR hydrogen from 5-enolpyruvylshikimate-3-phosphate (EPSP) to yield chorismate, which is the branch point compound that serves as the starting substrate for the three terminal pathways of aromatic amino acid biosynthesis. This reaction introduces a second double bond into the aromatic ring system. This is Chorismate synthase from Streptococcus equi subsp. zooepidemicus (strain MGCS10565).